The following is a 107-amino-acid chain: U20-lycotoxin-Ls1b (107 aa).

The first 30 residues, Met1–Ala30, serve as a signal peptide directing secretion. The WAP domain maps to Gly31–Ser76. 5 disulfides stabilise this stretch: Cys34/Cys64, Cys42/Cys68, Cys51/Cys63, Cys52/Cys90, and Cys57/Cys72.

Belongs to the venom protein 11 family. 02 (wap-2) subfamily. Contains 5 disulfide bonds. Expressed by the venom gland.

Its subcellular location is the secreted. In terms of biological role, has antibacterial activity. The chain is U20-lycotoxin-Ls1b from Lycosa singoriensis (Wolf spider).